A 70-amino-acid polypeptide reads, in one-letter code: Large ribosomal subunit protein bL31c (70 aa).

The protein belongs to the bacterial ribosomal protein bL31 family. Type A subfamily. As to quaternary structure, part of the 50S ribosomal subunit.

The protein localises to the plastid. Its subcellular location is the chloroplast. Functionally, binds the 23S rRNA. The sequence is that of Large ribosomal subunit protein bL31c from Pyropia yezoensis (Susabi-nori).